Here is a 233-residue protein sequence, read N- to C-terminus: U2 small nuclear ribonucleoprotein A' (233 aa).

LRR repeat units follow at residues 20–40, 42–63, 65–86, and 89–110; these read KLTL…AITQ, KYQV…PKRF, NLQC…SFPS, and HITS…FKDK. Residues 122-160 form the LRRCT domain; sequence NPITEMENYRYFIIWLIPSLKVLDFKKVKQAERKTSEDM.

It belongs to the U2 small nuclear ribonucleoprotein A family. Associated with the spliceosome.

The protein localises to the nucleus. Functionally, involved in pre-mRNA splicing. The polypeptide is U2 small nuclear ribonucleoprotein A' (LEA1) (Candida albicans (strain SC5314 / ATCC MYA-2876) (Yeast)).